We begin with the raw amino-acid sequence, 165 residues long: Chorismate pyruvate-lyase (165 aa).

Residues methionine 35, arginine 77, leucine 115, and glutamate 156 each contribute to the substrate site.

Belongs to the UbiC family. In terms of assembly, monomer.

Its subcellular location is the cytoplasm. It catalyses the reaction chorismate = 4-hydroxybenzoate + pyruvate. It functions in the pathway cofactor biosynthesis; ubiquinone biosynthesis. In terms of biological role, removes the pyruvyl group from chorismate, with concomitant aromatization of the ring, to provide 4-hydroxybenzoate (4HB) for the ubiquinone pathway. The polypeptide is Chorismate pyruvate-lyase (Shigella boydii serotype 18 (strain CDC 3083-94 / BS512)).